The following is a 544-amino-acid chain: Shootin-1 (544 aa).

Coiled coils occupy residues 17–100, 141–184, and 259–349; these read SNQV…LKRK, IVIT…EKHD, and EALQ…QVSN. The disordered stretch occupies residues 343–544; it reads KLQQVSNPPT…TTTICTEQLS (202 aa). Residues 352 to 371 show a composition bias toward pro residues; sequence TAAPAPPPPPPPPPPPPPPS. Low complexity predominate over residues 372–383; it reads SSSSNPLSSLLS. Basic and acidic residues predominate over residues 397–412; it reads LVEKDSSEKSPEKDVR. Residues 469–479 show a composition bias toward pro residues; that stretch reads SSSPGPRPPSP. Residues 480-504 adopt a coiled-coil conformation; that stretch reads SEKSELEKALQRRREAVKSAKNNTN. Residues 481 to 497 are compositionally biased toward basic and acidic residues; sequence EKSELEKALQRRREAVK. The segment covering 499-544 has biased composition (polar residues); that stretch reads AKNNTNPSSVVDLTQIKQTRSEPGQNTGDQETLRHTTTTICTEQLS.

Belongs to the shootin family.

It is found in the perikaryon. Its subcellular location is the cell projection. The protein resides in the axon. The protein localises to the growth cone. It localises to the cytoplasm. It is found in the cytoskeleton. Its subcellular location is the filopodium. The protein resides in the lamellipodium. Functionally, involved in the generation of internal asymmetric signals required for neuronal polarization and neurite outgrowth. The protein is Shootin-1 of Danio rerio (Zebrafish).